Consider the following 368-residue polypeptide: UDP-N-acetylglucosamine--N-acetylmuramyl-(pentapeptide) pyrophosphoryl-undecaprenol N-acetylglucosamine transferase (368 aa).

UDP-N-acetyl-alpha-D-glucosamine-binding positions include 10–12 (TGG), Asn-126, Ser-200, Ile-255, and Gln-300.

The protein belongs to the glycosyltransferase 28 family. MurG subfamily.

It localises to the cell membrane. It carries out the reaction Mur2Ac(oyl-L-Ala-gamma-D-Glu-L-Lys-D-Ala-D-Ala)-di-trans,octa-cis-undecaprenyl diphosphate + UDP-N-acetyl-alpha-D-glucosamine = beta-D-GlcNAc-(1-&gt;4)-Mur2Ac(oyl-L-Ala-gamma-D-Glu-L-Lys-D-Ala-D-Ala)-di-trans,octa-cis-undecaprenyl diphosphate + UDP + H(+). Its pathway is cell wall biogenesis; peptidoglycan biosynthesis. In terms of biological role, cell wall formation. Catalyzes the transfer of a GlcNAc subunit on undecaprenyl-pyrophosphoryl-MurNAc-pentapeptide (lipid intermediate I) to form undecaprenyl-pyrophosphoryl-MurNAc-(pentapeptide)GlcNAc (lipid intermediate II). The sequence is that of UDP-N-acetylglucosamine--N-acetylmuramyl-(pentapeptide) pyrophosphoryl-undecaprenol N-acetylglucosamine transferase from Lactobacillus helveticus (strain DPC 4571).